Reading from the N-terminus, the 603-residue chain is Methylenetetrahydrofolate reductase 1 (603 aa).

E21 functions as the Proton donor/acceptor in the catalytic mechanism. Residues 21-26 (EFFPPK) and 53-54 (TW) each bind NAD(+). Residues 53-54 (TW), H82, 112-114 (RGD), 130-131 (YA), Y153, and K173 contribute to the FAD site. D114 is a binding site for substrate. Substrate is bound by residues Q184 and Y276. S355 carries the post-translational modification Phosphoserine.

It belongs to the methylenetetrahydrofolate reductase family. It depends on FAD as a cofactor.

It carries out the reaction (6S)-5-methyl-5,6,7,8-tetrahydrofolate + NADP(+) = (6R)-5,10-methylene-5,6,7,8-tetrahydrofolate + NADPH + H(+). It catalyses the reaction (6S)-5-methyl-5,6,7,8-tetrahydrofolate + NAD(+) = (6R)-5,10-methylene-5,6,7,8-tetrahydrofolate + NADH + H(+). The protein operates within one-carbon metabolism; tetrahydrofolate interconversion. Its function is as follows. Major methylenetetrahydrofolate reductase required to generate the methyl groups necessary for methionine synthetase to convert homocysteine to methionine. Performs 80 to 85 percent of the total methylenetetrahydrofolate reductase activity of the cells. In Schizosaccharomyces pombe (strain 972 / ATCC 24843) (Fission yeast), this protein is Methylenetetrahydrofolate reductase 1 (met9).